A 1228-amino-acid polypeptide reads, in one-letter code: MCLPSHLLSTWVLFMAAQSLGKTWLPNHCRSPIKAVCNFVCDCGDCSDETQCGFHGASTIPSTSFTCNFEQDSCGWQDISTSGYRWLRDRAGAVLHGPGPHSDHTHGTDLGWYMAVGTHSGKEPSTATLRSPVMREAAPTCELRLWYHIASRDVAELRLDLTHGVETLTLWQTSGPWGPGWQELAVNTGRIQGDFKVTFSATRNATHRGAVALDDVEFRDCGLPIPQARCPLGHHHCQNKACVEPHQLCDGEDNCGDRSDEDPLICSHHMATDFETGLGPWNQLEGWTRNHSAGSMVSPAWPHRDHSRNSAYGFFLISVAKPGTTAVLYSPEFQGSVSNNCSFTFYYYLHGSEASHFQLFLQAQGLNTPQVPVLLRSRHGELGTAWVRDRVDIQSAHPFRILLAGETGPGGVVGLDDLIMSSHCMLVPAMSTLQSSLSGPVPLALYPQTSIKLPQQTCEPGHLSCGDLCVPPEQLCDFQKHCAEGEDEHKCGTTDFESASAGGWEDISVGKLQWQWVEAQEKSKPAGDANRDAPGHFLSLQKAWGQLRSEARALTPALGPSGPHCELHMAYYFQSHPQGFLALVVVENGFRELLWQAPGGGSGSWTEEKIILGARRRPFQLEFVSLVDLDGPGQQGAGVDNVTLRDCNPMVTTESDQELSCNFERDSCSWHTGHLTDAHWHRIKSHGSQLDHTTGQGFFMFLDPTDPPARGQGALLLTRPQVPVVPKECLSFWYRLYGPQIGTLCLAMRREREEDILLWSRSGTHGNRWHQAWVTLHHQPEASTKYQLLFEGLRNGYHGTMALDDIAVRPGPCWAPKSCSFEDSDCGFSPGGWGLWTHQSNASGLASWGPWIDHTTGTAQGHYMVVDTSPNVLPKGHVAALTSEEHQPLSQPACLTFWYHMSVPNPGTLRVHVEESTRRQELSISAHGRSAWRLGSVNVQAEQAWKVVFEAVAAGVEYSYMALDDISLQDGPCPQPGSCDFETGLCGWSHLPWPSLGGYSWDWSSGATPSRYPQPSVDHTLGTEAGHFAFFETSVLGPGGQAAWLRSEPLPATTVSCLRFWYYMGFPEHFYKGELRVLLSSARGQLAVWYQGGHLRDQWLQVQIELSNSEEFQIVFEATLGGQPALGPIAIDDVQYLAGQQCKQPSPSQGEVAAPVSVPVAVGGALLFFMFLVLMGLGGWHWLQKQHCPGQRSTDAAASGFANILFNADHVTLPESITSNPQSPPDLA.

Positions 1 to 21 (MCLPSHLLSTWVLFMAAQSLG) are cleaved as a signal peptide. Residues 23 to 1159 (TWLPNHCRSP…GEVAAPVSVP (1137 aa)) lie on the Extracellular side of the membrane. The LDL-receptor class A 1; truncated domain occupies 28–49 (HCRSPIKAVCNFVCDCGDCSDE). Residues 65-223 (FTCNFEQDSC…DDVEFRDCGL (159 aa)) enclose the MAM 1 domain. N-linked (GlcNAc...) asparagine glycosylation is present at Asn204. The region spanning 229 to 267 (RCPLGHHHCQNKACVEPHQLCDGEDNCGDRSDEDPLICS) is the LDL-receptor class A 2 domain. 3 cysteine pairs are disulfide-bonded: Cys230-Cys242, Cys237-Cys255, and Cys249-Cys266. Residues 270–426 (MATDFETGLG…DLIMSSHCML (157 aa)) enclose the MAM 2 domain. Asn290 and Asn340 each carry an N-linked (GlcNAc...) asparagine glycan. The LDL-receptor class A 3 domain occupies 457 to 492 (TCEPGHLSCGDLCVPPEQLCDFQKHCAEGEDEHKCG). Disulfide bonds link Cys458–Cys469, Cys465–Cys482, and Cys476–Cys491. MAM domains lie at 492-649 (GTTD…DCNP), 659-815 (LSCN…PCWA), 817-975 (KSCS…PCPQ), and 977-1144 (GSCD…QCKQ). Asn641 carries N-linked (GlcNAc...) asparagine glycosylation. An N-linked (GlcNAc...) asparagine glycan is attached at Asn841. Residues 1160–1180 (VAVGGALLFFMFLVLMGLGGW) traverse the membrane as a helical segment. At 1181-1228 (HWLQKQHCPGQRSTDAAASGFANILFNADHVTLPESITSNPQSPPDLA) the chain is on the cytoplasmic side.

It is found in the membrane. Functionally, probably involved in the sorting and selective transport of receptors and ligands across polarized epithelia. The chain is Apical endosomal glycoprotein from Mus musculus (Mouse).